The sequence spans 238 residues: tRNA (guanine-N(7)-)-methyltransferase (238 aa).

Residues glutamate 68, glutamate 93, aspartate 120, and aspartate 143 each coordinate S-adenosyl-L-methionine. Aspartate 143 is an active-site residue. Substrate contacts are provided by residues lysine 147, aspartate 179, and 216–219; that span reads TKFE.

It belongs to the class I-like SAM-binding methyltransferase superfamily. TrmB family.

The catalysed reaction is guanosine(46) in tRNA + S-adenosyl-L-methionine = N(7)-methylguanosine(46) in tRNA + S-adenosyl-L-homocysteine. It functions in the pathway tRNA modification; N(7)-methylguanine-tRNA biosynthesis. Catalyzes the formation of N(7)-methylguanine at position 46 (m7G46) in tRNA. In Ectopseudomonas mendocina (strain ymp) (Pseudomonas mendocina), this protein is tRNA (guanine-N(7)-)-methyltransferase.